The sequence spans 469 residues: Adenosylhomocysteinase (469 aa).

Threonine 63, aspartate 139, and glutamate 164 together coordinate substrate. An NAD(+)-binding site is contributed by 165–167 (TTT). 2 residues coordinate substrate: lysine 194 and aspartate 198. NAD(+)-binding positions include asparagine 199, 228–233 (GYGDVG), glutamate 251, asparagine 300, 321–323 (IGH), and asparagine 375.

This sequence belongs to the adenosylhomocysteinase family. The cofactor is NAD(+).

The protein localises to the cytoplasm. It carries out the reaction S-adenosyl-L-homocysteine + H2O = L-homocysteine + adenosine. It participates in amino-acid biosynthesis; L-homocysteine biosynthesis; L-homocysteine from S-adenosyl-L-homocysteine: step 1/1. In terms of biological role, may play a key role in the regulation of the intracellular concentration of adenosylhomocysteine. The protein is Adenosylhomocysteinase of Pseudomonas syringae pv. tomato (strain ATCC BAA-871 / DC3000).